Here is a 128-residue protein sequence, read N- to C-terminus: Sirohydrochlorin cobaltochelatase (128 aa).

His9 serves as the catalytic Proton acceptor. His9 provides a ligand contact to Co(2+). Substrate-binding positions include Lys43 and 68 to 73 (FATGTH). His73 provides a ligand contact to Co(2+).

This sequence belongs to the CbiX family. CbiXS subfamily. Homotetramer; dimer of dimers.

The catalysed reaction is Co-sirohydrochlorin + 2 H(+) = sirohydrochlorin + Co(2+). Its pathway is cofactor biosynthesis; adenosylcobalamin biosynthesis; cob(II)yrinate a,c-diamide from sirohydrochlorin (anaerobic route): step 1/10. Functionally, catalyzes the insertion of Co(2+) into sirohydrochlorin as part of the anaerobic pathway to cobalamin biosynthesis. The protein is Sirohydrochlorin cobaltochelatase of Saccharolobus solfataricus (strain ATCC 35092 / DSM 1617 / JCM 11322 / P2) (Sulfolobus solfataricus).